Reading from the N-terminus, the 747-residue chain is Endoglucanase C (747 aa).

The signal sequence occupies residues 1–37 (MGHVTSPSKRYPASFKRAGSILGVSIALAAFSNVAAA). The CBM2 domain occupies 38 to 136 (GCEYVVTNSW…TVNGAACTGG (99 aa)). 3 disulfide bridges follow: C39–C133, C183–C214, and C193–C208. Residues 182-211 (QCNWYGTLYPLCVSTTSGWGYENNRSCISP) enclose the CBM10 domain. Residues 226 to 283 (GSSSPSSISSSSVRSSSSSSVVPPSSSSSSSVPSSSSSSVSSSSVVSSSSSSVSVPGT) are disordered. Low complexity predominate over residues 227–281 (SSSPSSISSSSVRSSSSSSVVPPSSSSSSSVPSSSSSSVSSSSVVSSSSSSVSVP). The catalytic stretch occupies residues 280-747 (VPGTGVFRVN…TQLLHNMWGL (468 aa)). E502 acts as the Proton donor in catalysis. Residue E652 is the Nucleophile of the active site.

Belongs to the glycosyl hydrolase 5 (cellulase A) family.

The catalysed reaction is Endohydrolysis of (1-&gt;4)-beta-D-glucosidic linkages in cellulose, lichenin and cereal beta-D-glucans.. This is Endoglucanase C (celC) from Cellvibrio japonicus (strain Ueda107) (Pseudomonas fluorescens subsp. cellulosa).